A 294-amino-acid chain; its full sequence is Nitrogenase iron protein (294 aa).

Residue glycine 11 to serine 18 participates in ATP binding. Cysteine 99 contributes to the [4Fe-4S] cluster binding site. Position 102 is an ADP-ribosylarginine; by dinitrogenase reductase ADP-ribosyltransferase (arginine 102). Cysteine 133 is a [4Fe-4S] cluster binding site.

The protein belongs to the NifH/BchL/ChlL family. In terms of assembly, homodimer. It depends on [4Fe-4S] cluster as a cofactor. In terms of processing, the reversible ADP-ribosylation of Arg-102 inactivates the nitrogenase reductase and regulates nitrogenase activity.

It carries out the reaction N2 + 8 reduced [2Fe-2S]-[ferredoxin] + 16 ATP + 16 H2O = H2 + 8 oxidized [2Fe-2S]-[ferredoxin] + 2 NH4(+) + 16 ADP + 16 phosphate + 6 H(+). Its function is as follows. The key enzymatic reactions in nitrogen fixation are catalyzed by the nitrogenase complex, which has 2 components: the iron protein and the molybdenum-iron protein. This is Nitrogenase iron protein (nifH) from Bradyrhizobium sp. (strain ANU 289).